The following is a 510-amino-acid chain: Light-independent protochlorophyllide reductase subunit B (510 aa).

Asp36 is a binding site for [4Fe-4S] cluster. The Proton donor role is filled by Asp296. Gly431–Met432 provides a ligand contact to substrate.

This sequence belongs to the ChlB/BchB/BchZ family. In terms of assembly, protochlorophyllide reductase is composed of three subunits; ChlL, ChlN and ChlB. Forms a heterotetramer of two ChlB and two ChlN subunits. It depends on [4Fe-4S] cluster as a cofactor.

The protein localises to the plastid. It localises to the chloroplast. The catalysed reaction is chlorophyllide a + oxidized 2[4Fe-4S]-[ferredoxin] + 2 ADP + 2 phosphate = protochlorophyllide a + reduced 2[4Fe-4S]-[ferredoxin] + 2 ATP + 2 H2O. The protein operates within porphyrin-containing compound metabolism; chlorophyll biosynthesis (light-independent). Component of the dark-operative protochlorophyllide reductase (DPOR) that uses Mg-ATP and reduced ferredoxin to reduce ring D of protochlorophyllide (Pchlide) to form chlorophyllide a (Chlide). This reaction is light-independent. The NB-protein (ChlN-ChlB) is the catalytic component of the complex. The chain is Light-independent protochlorophyllide reductase subunit B from Auxenochlorella protothecoides (Green microalga).